Consider the following 217-residue polypeptide: Outer-membrane lipoprotein LolB (217 aa).

A signal peptide spans 1–20 (MSKTVRTLALGGLVLAGLSA). A lipid anchor (N-palmitoyl cysteine) is attached at Cys-21. Cys-21 carries S-diacylglycerol cysteine lipidation. Residues 105-124 (DTTSGAGRLEGLEGGPRSGP) are disordered.

This sequence belongs to the LolB family. Monomer.

The protein localises to the cell outer membrane. Functionally, plays a critical role in the incorporation of lipoproteins in the outer membrane after they are released by the LolA protein. This Xanthomonas axonopodis pv. citri (strain 306) protein is Outer-membrane lipoprotein LolB.